The chain runs to 209 residues: uncharacterized protein (209 aa).

4Fe-4S ferredoxin-type domains follow at residues 38–67 (KTKP…IFSF), 63–92 (KIFS…KDRF), 90–119 (DRFT…KEIP), 122–151 (KTPV…EINP), 145–174 (INKE…TPDE), and 179–209 (LIVK…HRES). Residues Cys47, Cys50, Cys53, Cys57, Cys72, Cys75, Cys78, Cys82, Cys99, Cys102, Cys105, and Cys109 each contribute to the [4Fe-4S] cluster site. 8 residues coordinate [4Fe-4S] cluster: Cys154, Cys157, Cys160, Cys164, Cys188, Cys191, Cys194, and Cys198.

This is an uncharacterized protein from Methanocaldococcus jannaschii (strain ATCC 43067 / DSM 2661 / JAL-1 / JCM 10045 / NBRC 100440) (Methanococcus jannaschii).